Here is a 329-residue protein sequence, read N- to C-terminus: 31 kDa immunogenic protein (329 aa).

A signal peptide spans 1–28; the sequence is MKFGSKIRRLAVAAVAGAIALGASFAVA.

The protein is 31 kDa immunogenic protein (bcsP31) of Brucella abortus biovar 1 (strain 9-941).